Consider the following 301-residue polypeptide: Cutinase (301 aa).

A signal peptide spans 1 to 40 (MAVMTPRRERSSLLSRALQVTAAAATALVTAVSLAAPAHA). Tyrosine 100 is a binding site for poly(ethylene terephthalate). Serine 170 functions as the Nucleophile in the catalytic mechanism. Residues methionine 171 and tryptophan 195 each contribute to the poly(ethylene terephthalate) site. Residues aspartate 216 and histidine 248 each act as charge relay system in the active site. A disulfide bond links cysteine 281 and cysteine 299.

Belongs to the AB hydrolase superfamily.

The protein resides in the secreted. It is found in the periplasm. It carries out the reaction a butanoate ester + H2O = an aliphatic alcohol + butanoate + H(+). The catalysed reaction is (ethylene terephthalate)(n) + H2O = (ethylene terephthalate)(n-1) + 4-[(2-hydroxyethoxy)carbonyl]benzoate + H(+). The enzyme catalyses cutin + H2O = cutin monomers.. Activated by magnesium ions. Activated by calcium ions. Inhibited by the serine hydrolase inhibitor phenylmethanesulfonyl fluoride (PMSF). Its function is as follows. Catalyzes the hydrolysis of cutin, a polyester that forms the structure of plant cuticle. Shows esterase activity towards p-nitrophenol-linked aliphatic esters (pNP-aliphatic esters). Also hydrolyzes the triglyceride triolein. Capable of degrading the plastic poly(ethylene terephthalate) (PET), the most abundant polyester plastic in the world. The protein is Cutinase of Thermobifida fusca (strain YX).